A 350-amino-acid chain; its full sequence is Atypical chemokine receptor 4 (350 aa).

Residues methionine 1–valine 42 are Extracellular-facing. 2 N-linked (GlcNAc...) asparagine glycosylation sites follow: asparagine 6 and asparagine 19. The helical transmembrane segment at phenylalanine 43–valine 63 threads the bilayer. The Cytoplasmic portion of the chain corresponds to alanine 64 to aspartate 87. The chain crosses the membrane as a helical span at residues leucine 88 to glycine 108. The Extracellular segment spans residues lysine 109–lysine 113. Cysteines 112 and 184 form a disulfide. A helical transmembrane segment spans residues isoleucine 114–serine 134. The Cytoplasmic portion of the chain corresponds to isoleucine 135 to cysteine 154. The helical transmembrane segment at tryptophan 155–phenylalanine 175 threads the bilayer. Residues tyrosine 176–glutamine 201 lie on the Extracellular side of the membrane. Residues methionine 202–isoleucine 222 form a helical membrane-spanning segment. The Cytoplasmic portion of the chain corresponds to threonine 223 to lysine 240. The helical transmembrane segment at valine 241 to phenylalanine 261 threads the bilayer. The Extracellular segment spans residues cysteine 262 to glutamate 289. The helical transmembrane segment at serine 290–phenylalanine 310 threads the bilayer. The Cytoplasmic segment spans residues lysine 311–isoleucine 350.

The protein belongs to the G-protein coupled receptor 1 family. Atypical chemokine receptor subfamily. As to quaternary structure, forms heteromers with CXCR3. Interacts with ARRB1 and ARRB2. Post-translationally, the Ser/Thr residues in the C-terminal cytoplasmic tail may be phosphorylated. Predominantly expressed in heart. Lower expression in lung, pancreas, spleen, colon, skeletal muscle and small intestine.

It localises to the early endosome. The protein localises to the recycling endosome. The protein resides in the cell membrane. Atypical chemokine receptor that controls chemokine levels and localization via high-affinity chemokine binding that is uncoupled from classic ligand-driven signal transduction cascades, resulting instead in chemokine sequestration, degradation, or transcytosis. Also known as interceptor (internalizing receptor) or chemokine-scavenging receptor or chemokine decoy receptor. Acts as a receptor for chemokines CCL2, CCL8, CCL13, CCL19, CCL21 and CCL25. Chemokine-binding does not activate G-protein-mediated signal transduction but instead induces beta-arrestin recruitment, leading to ligand internalization. Plays an important role in controlling the migration of immune and cancer cells that express chemokine receptors CCR7 and CCR9, by reducing the availability of CCL19, CCL21, and CCL25 through internalization. Negatively regulates CXCR3-induced chemotaxis. Regulates T-cell development in the thymus. In Homo sapiens (Human), this protein is Atypical chemokine receptor 4 (ACKR4).